The primary structure comprises 421 residues: tRNA(Ile)-lysidine synthase (421 aa).

Residue 26 to 31 (SGGADS) participates in ATP binding.

Belongs to the tRNA(Ile)-lysidine synthase family.

The protein localises to the cytoplasm. The catalysed reaction is cytidine(34) in tRNA(Ile2) + L-lysine + ATP = lysidine(34) in tRNA(Ile2) + AMP + diphosphate + H(+). In terms of biological role, ligates lysine onto the cytidine present at position 34 of the AUA codon-specific tRNA(Ile) that contains the anticodon CAU, in an ATP-dependent manner. Cytidine is converted to lysidine, thus changing the amino acid specificity of the tRNA from methionine to isoleucine. The sequence is that of tRNA(Ile)-lysidine synthase from Streptococcus thermophilus (strain CNRZ 1066).